Consider the following 663-residue polypeptide: Spore germination protein GerIA (663 aa).

Positions 1 to 13 (MIWNWLRKKKKSN) are enriched in basic residues. Positions 1 to 175 (MIWNWLRKKK…SGGNSIYDFT (175 aa)) are disordered. Over residues 47–56 (KNNEQKDSSQ) the composition is skewed to basic and acidic residues. Composition is skewed to low complexity over residues 57–72 (DKQQSAKQGDSSQDKQ), 88–101 (PKQGDSSQDKQQSA), and 122–150 (DKQQSAKQGDSSQDKQQSAKQGDSSQDKQ). A run of 5 helical transmembrane segments spans residues 414 to 434 (IFVDGSPSVLLTPVSYFDFFI), 451 to 471 (ILRLIAVLFSICATPLYVAVL), 491 to 511 (AQVPFPPLIEALFLELAIDLL), 541 to 561 (AGLTSNILLIIVALSALASFI), and 578 to 598 (FLAFAEIGGLFGISLGFIFLF).

The protein belongs to the GerABKA family.

The protein localises to the cell membrane. Functionally, required for inosine germination. This is Spore germination protein GerIA (gerIA) from Bacillus cereus.